A 702-amino-acid polypeptide reads, in one-letter code: Elongation factor G 2 (702 aa).

Residues 8–290 enclose the tr-type G domain; sequence ERYRNIGISA…AVIDYLPSPV (283 aa). GTP-binding positions include 17-24, 88-92, and 142-145; these read AHIDAGKT, DTPGH, and NKMD.

It belongs to the TRAFAC class translation factor GTPase superfamily. Classic translation factor GTPase family. EF-G/EF-2 subfamily.

It is found in the cytoplasm. Catalyzes the GTP-dependent ribosomal translocation step during translation elongation. During this step, the ribosome changes from the pre-translocational (PRE) to the post-translocational (POST) state as the newly formed A-site-bound peptidyl-tRNA and P-site-bound deacylated tRNA move to the P and E sites, respectively. Catalyzes the coordinated movement of the two tRNA molecules, the mRNA and conformational changes in the ribosome. The protein is Elongation factor G 2 of Cupriavidus metallidurans (strain ATCC 43123 / DSM 2839 / NBRC 102507 / CH34) (Ralstonia metallidurans).